Here is a 395-residue protein sequence, read N- to C-terminus: S-adenosylmethionine synthase (395 aa).

ATP is bound at residue His-18. Asp-20 provides a ligand contact to Mg(2+). Position 46 (Glu-46) interacts with K(+). The L-methionine site is built by Glu-59 and Gln-103. The tract at residues 103–113 (QSVDIAVGVDA) is flexible loop. Residues 170-172 (DAK), 235-236 (KF), Asp-244, 250-251 (RK), Ala-267, and Lys-271 each bind ATP. Asp-244 contacts L-methionine. L-methionine is bound at residue Lys-275.

This sequence belongs to the AdoMet synthase family. In terms of assembly, homotetramer; dimer of dimers. Mg(2+) serves as cofactor. It depends on K(+) as a cofactor.

The protein localises to the cytoplasm. It carries out the reaction L-methionine + ATP + H2O = S-adenosyl-L-methionine + phosphate + diphosphate. It participates in amino-acid biosynthesis; S-adenosyl-L-methionine biosynthesis; S-adenosyl-L-methionine from L-methionine: step 1/1. Catalyzes the formation of S-adenosylmethionine (AdoMet) from methionine and ATP. The overall synthetic reaction is composed of two sequential steps, AdoMet formation and the subsequent tripolyphosphate hydrolysis which occurs prior to release of AdoMet from the enzyme. The sequence is that of S-adenosylmethionine synthase from Acidiphilium cryptum (strain JF-5).